Reading from the N-terminus, the 426-residue chain is Glutamate-1-semialdehyde 2,1-aminomutase (426 aa).

Lys265 carries the post-translational modification N6-(pyridoxal phosphate)lysine.

The protein belongs to the class-III pyridoxal-phosphate-dependent aminotransferase family. HemL subfamily. In terms of assembly, homodimer. Pyridoxal 5'-phosphate serves as cofactor.

The protein resides in the cytoplasm. The enzyme catalyses (S)-4-amino-5-oxopentanoate = 5-aminolevulinate. The protein operates within porphyrin-containing compound metabolism; protoporphyrin-IX biosynthesis; 5-aminolevulinate from L-glutamyl-tRNA(Glu): step 2/2. In Salmonella choleraesuis (strain SC-B67), this protein is Glutamate-1-semialdehyde 2,1-aminomutase.